Reading from the N-terminus, the 122-residue chain is Nodulation protein NolR (122 aa).

One can recognise an HTH arsR-type domain in the interval 15–109 (EKHEDAEIAA…ALSDIYGDDT (95 aa)). The segment at residues 49-68 (VGALAHKVGLSQSALSQHLS) is a DNA-binding region (H-T-H motif).

As to quaternary structure, binds to the operator site in homodimeric form.

Negative transacting factor controlling the nod regulon. May control the expression of nodD1, nodD2, nodD3 and nodABC genes. The chain is Nodulation protein NolR (nolR) from Rhizobium meliloti (Ensifer meliloti).